A 174-amino-acid chain; its full sequence is uncharacterized protein (174 aa).

This is an uncharacterized protein from Caenorhabditis elegans.